Consider the following 100-residue polypeptide: UPF0213 protein YhbQ (100 aa).

One can recognise a GIY-YIG domain in the interval 2 to 77 (TPWFLYLIRT…KQLTKRQKER (76 aa)).

Belongs to the UPF0213 family.

The polypeptide is UPF0213 protein YhbQ (Escherichia fergusonii (strain ATCC 35469 / DSM 13698 / CCUG 18766 / IAM 14443 / JCM 21226 / LMG 7866 / NBRC 102419 / NCTC 12128 / CDC 0568-73)).